A 155-amino-acid chain; its full sequence is Small ribosomal subunit protein uS7c (155 aa).

Belongs to the universal ribosomal protein uS7 family. In terms of assembly, part of the 30S ribosomal subunit.

The protein localises to the plastid. It localises to the chloroplast. Functionally, one of the primary rRNA binding proteins, it binds directly to 16S rRNA where it nucleates assembly of the head domain of the 30S subunit. The sequence is that of Small ribosomal subunit protein uS7c (rps7) from Spathiphyllum wallisii (Peace lily).